The sequence spans 66 residues: MIGGLGMPELIIILVIILIIFGAGKLPEIGSGIGKGIKNFKKATRDAELNEGDKDDKEKEQEKLDK.

A helical membrane pass occupies residues 1–21 (MIGGLGMPELIIILVIILIIF). Residues 45–66 (RDAELNEGDKDDKEKEQEKLDK) form a disordered region.

The protein belongs to the TatA/E family. As to quaternary structure, the Tat system comprises two distinct complexes: a TatABC complex, containing multiple copies of TatA, TatB and TatC subunits, and a separate TatA complex, containing only TatA subunits. Substrates initially bind to the TatABC complex, which probably triggers association of the separate TatA complex to form the active translocon.

The protein localises to the cell inner membrane. Part of the twin-arginine translocation (Tat) system that transports large folded proteins containing a characteristic twin-arginine motif in their signal peptide across membranes. TatA could form the protein-conducting channel of the Tat system. The sequence is that of Sec-independent protein translocase protein TatA from Desulforapulum autotrophicum (strain ATCC 43914 / DSM 3382 / VKM B-1955 / HRM2) (Desulfobacterium autotrophicum).